Reading from the N-terminus, the 105-residue chain is Large ribosomal subunit protein uL24 (105 aa).

It belongs to the universal ribosomal protein uL24 family. In terms of assembly, part of the 50S ribosomal subunit.

Functionally, one of two assembly initiator proteins, it binds directly to the 5'-end of the 23S rRNA, where it nucleates assembly of the 50S subunit. In terms of biological role, one of the proteins that surrounds the polypeptide exit tunnel on the outside of the subunit. The protein is Large ribosomal subunit protein uL24 of Nitrosospira multiformis (strain ATCC 25196 / NCIMB 11849 / C 71).